Here is a 431-residue protein sequence, read N- to C-terminus: Adenylosuccinate lyase (431 aa).

N(6)-(1,2-dicarboxyethyl)-AMP contacts are provided by residues 4 to 5, 67 to 69, and 93 to 94; these read RY, RHD, and TS. The Proton donor/acceptor role is filled by H141. Q212 contacts N(6)-(1,2-dicarboxyethyl)-AMP. The active-site Proton donor/acceptor is S262. Residues S263, 268 to 270, and 307 to 311 each bind N(6)-(1,2-dicarboxyethyl)-AMP; these read KRN and SVERV.

This sequence belongs to the lyase 1 family. Adenylosuccinate lyase subfamily. As to quaternary structure, homooligomer. Residues from neighboring subunits contribute catalytic and substrate-binding residues to each active site.

It catalyses the reaction N(6)-(1,2-dicarboxyethyl)-AMP = fumarate + AMP. It carries out the reaction (2S)-2-[5-amino-1-(5-phospho-beta-D-ribosyl)imidazole-4-carboxamido]succinate = 5-amino-1-(5-phospho-beta-D-ribosyl)imidazole-4-carboxamide + fumarate. It participates in purine metabolism; AMP biosynthesis via de novo pathway; AMP from IMP: step 2/2. It functions in the pathway purine metabolism; IMP biosynthesis via de novo pathway; 5-amino-1-(5-phospho-D-ribosyl)imidazole-4-carboxamide from 5-amino-1-(5-phospho-D-ribosyl)imidazole-4-carboxylate: step 2/2. In terms of biological role, catalyzes two reactions in de novo purine nucleotide biosynthesis. Catalyzes the breakdown of 5-aminoimidazole- (N-succinylocarboxamide) ribotide (SAICAR or 2-[5-amino-1-(5-phospho-beta-D-ribosyl)imidazole-4-carboxamido]succinate) to 5-aminoimidazole-4-carboxamide ribotide (AICAR or 5-amino-1-(5-phospho-beta-D-ribosyl)imidazole-4-carboxamide) and fumarate, and of adenylosuccinate (ADS or N(6)-(1,2-dicarboxyethyl)-AMP) to adenosine monophosphate (AMP) and fumarate. This chain is Adenylosuccinate lyase (purB), found in Synechocystis sp. (strain ATCC 27184 / PCC 6803 / Kazusa).